A 494-amino-acid polypeptide reads, in one-letter code: Glutamate--tRNA ligase (494 aa).

The 'HIGH' region motif lies at 10–20; it reads PSPTGDPHVGT. Positions 107, 109, 134, and 136 each coordinate Zn(2+). The 'KMSKS' region motif lies at 251-255; that stretch reads KLSKR. Lysine 254 provides a ligand contact to ATP.

This sequence belongs to the class-I aminoacyl-tRNA synthetase family. Glutamate--tRNA ligase type 1 subfamily. As to quaternary structure, monomer. The cofactor is Zn(2+).

Its subcellular location is the cytoplasm. The catalysed reaction is tRNA(Glu) + L-glutamate + ATP = L-glutamyl-tRNA(Glu) + AMP + diphosphate. Its function is as follows. Catalyzes the attachment of glutamate to tRNA(Glu) in a two-step reaction: glutamate is first activated by ATP to form Glu-AMP and then transferred to the acceptor end of tRNA(Glu). In Pseudomonas aeruginosa (strain ATCC 15692 / DSM 22644 / CIP 104116 / JCM 14847 / LMG 12228 / 1C / PRS 101 / PAO1), this protein is Glutamate--tRNA ligase.